The sequence spans 155 residues: Cytochrome P450 (155 aa).

Cys99 contacts heme.

It belongs to the cytochrome P450 family. The cofactor is heme.

The polypeptide is Cytochrome P450 (Helianthus annuus (Common sunflower)).